A 353-amino-acid polypeptide reads, in one-letter code: C-C chemokine receptor type 8 (353 aa).

Residues 1–33 are Extracellular-facing; the sequence is MDYTMEPNVTMTDYYPDFFTAPCDAEFLLRGSM. Asparagine 8 carries an N-linked (GlcNAc...) asparagine glycan. The helical transmembrane segment at 34-61 threads the bilayer; that stretch reads LYLAILYCVLFVLGLLGNSLVILVLVGC. Topologically, residues 62–71 are cytoplasmic; sequence KKLRSITDIY. The helical transmembrane segment at 72 to 91 threads the bilayer; sequence LLNLAASDLLFVLSIPFQTH. Residues 92–105 are Extracellular-facing; sequence NLLDQWVFGTAMCK. Cysteines 104 and 181 form a disulfide. Residues 106-127 form a helical membrane-spanning segment; the sequence is VVSGLYYIGFFSSMFFITLMSV. Topologically, residues 128–144 are cytoplasmic; it reads DRYLAIVHAVYAIKVRT. A helical transmembrane segment spans residues 145-169; that stretch reads ASVGTALSLTVWLAAVTATIPLMVF. The Extracellular segment spans residues 170–200; the sequence is YQVASEDGMLQCFQFYEEQSLRWKLFTHFEI. A helical membrane pass occupies residues 201–220; sequence NALGLLLPFAILLFCYVRIL. Residues 221-236 lie on the Cytoplasmic side of the membrane; sequence QQLRGCLNHNRTRAIK. A helical transmembrane segment spans residues 237-261; it reads LVLTVVIVSLLFWVPFNVALFLTSL. Residues 262–278 lie on the Extracellular side of the membrane; the sequence is HDLHILDGCATRQRLAL. A helical transmembrane segment spans residues 279 to 302; that stretch reads AIHVTEVISFTHCCVNPVIYAFIG. The Cytoplasmic portion of the chain corresponds to 303 to 353; the sequence is EKFKKHLMDVFQKSCSHIFLYLGRQMPVGALERQLSSNQRSSHSSTLDDIL.

It belongs to the G-protein coupled receptor 1 family. As to expression, expressed in thymus.

The protein resides in the cell membrane. In terms of biological role, receptor for the CCL1/SCY1/TCA-3 chemokine. The polypeptide is C-C chemokine receptor type 8 (Ccr8) (Mus musculus (Mouse)).